The chain runs to 469 residues: Protopanaxadiol 6-hydroxylase (469 aa).

Residues 3 to 23 form a helical membrane-spanning segment; the sequence is LFISSQLLLLLVFCLFLFWNF. Position 416 (cysteine 416) interacts with heme.

Belongs to the cytochrome P450 family. It depends on heme as a cofactor. Accumulates ubiquitously in all organs of plants, including roots, stems and leaves.

It is found in the membrane. The enzyme catalyses (20S)-protopanaxadiol + reduced [NADPH--hemoprotein reductase] + O2 = (20S)-protopanaxatriol + oxidized [NADPH--hemoprotein reductase] + H2O + H(+). It functions in the pathway secondary metabolite biosynthesis; terpenoid biosynthesis. Its activity is regulated as follows. Activated by N,N'-dicyclohexylcarbodiimide (DCCD) thus leading to increased ginsenosides accumulation. Component of the dammarane-type triterpene saponins (e.g. PPT-type ginsenosides or panaxosides) biosynthetic pathway. Catalyzes the formation of protopanaxatriol from protopanaxadiol during ginsenoside biosynthesis, a class of tetracyclic triterpenoid saponins. This chain is Protopanaxadiol 6-hydroxylase, found in Panax ginseng (Korean ginseng).